Consider the following 1380-residue polypeptide: DNA-directed RNA polymerase subunit beta (1380 aa).

Belongs to the RNA polymerase beta chain family. As to quaternary structure, the RNAP catalytic core consists of 2 alpha, 1 beta, 1 beta' and 1 omega subunit. When a sigma factor is associated with the core the holoenzyme is formed, which can initiate transcription.

The catalysed reaction is RNA(n) + a ribonucleoside 5'-triphosphate = RNA(n+1) + diphosphate. Its function is as follows. DNA-dependent RNA polymerase catalyzes the transcription of DNA into RNA using the four ribonucleoside triphosphates as substrates. The protein is DNA-directed RNA polymerase subunit beta of Rhizobium meliloti (strain 1021) (Ensifer meliloti).